We begin with the raw amino-acid sequence, 156 residues long: Small ribosomal subunit protein uS7 (156 aa).

The protein belongs to the universal ribosomal protein uS7 family. In terms of assembly, part of the 30S ribosomal subunit. Contacts proteins S9 and S11.

One of the primary rRNA binding proteins, it binds directly to 16S rRNA where it nucleates assembly of the head domain of the 30S subunit. Is located at the subunit interface close to the decoding center, probably blocks exit of the E-site tRNA. This chain is Small ribosomal subunit protein uS7, found in Mesorhizobium japonicum (strain LMG 29417 / CECT 9101 / MAFF 303099) (Mesorhizobium loti (strain MAFF 303099)).